Consider the following 503-residue polypeptide: Probable cytosol aminopeptidase (503 aa).

Mn(2+) contacts are provided by lysine 270 and aspartate 275. The active site involves lysine 282. Aspartate 293, aspartate 352, and glutamate 354 together coordinate Mn(2+). Residue arginine 356 is part of the active site.

The protein belongs to the peptidase M17 family. Mn(2+) serves as cofactor.

Its subcellular location is the cytoplasm. It catalyses the reaction Release of an N-terminal amino acid, Xaa-|-Yaa-, in which Xaa is preferably Leu, but may be other amino acids including Pro although not Arg or Lys, and Yaa may be Pro. Amino acid amides and methyl esters are also readily hydrolyzed, but rates on arylamides are exceedingly low.. The catalysed reaction is Release of an N-terminal amino acid, preferentially leucine, but not glutamic or aspartic acids.. Presumably involved in the processing and regular turnover of intracellular proteins. Catalyzes the removal of unsubstituted N-terminal amino acids from various peptides. The chain is Probable cytosol aminopeptidase from Sodalis glossinidius (strain morsitans).